The chain runs to 338 residues: Tetraacyldisaccharide 4'-kinase (338 aa).

53–60 (VAGGAGKT) lines the ATP pocket.

It belongs to the LpxK family.

It carries out the reaction a lipid A disaccharide + ATP = a lipid IVA + ADP + H(+). It participates in glycolipid biosynthesis; lipid IV(A) biosynthesis; lipid IV(A) from (3R)-3-hydroxytetradecanoyl-[acyl-carrier-protein] and UDP-N-acetyl-alpha-D-glucosamine: step 6/6. Its function is as follows. Transfers the gamma-phosphate of ATP to the 4'-position of a tetraacyldisaccharide 1-phosphate intermediate (termed DS-1-P) to form tetraacyldisaccharide 1,4'-bis-phosphate (lipid IVA). This chain is Tetraacyldisaccharide 4'-kinase, found in Polaromonas sp. (strain JS666 / ATCC BAA-500).